The sequence spans 380 residues: Cytoplasmic protein NCK2 (380 aa).

Threonine 2 is modified (N-acetylthreonine). One can recognise an SH3 1 domain in the interval 2 to 61 (TEEVIVIAKWDYTAQQDQELDIKKNERLWLLDDSKTWWRVRNAANRTGYVPSNYVERKNS). The segment at 79–102 (KTRRKTSARDASPTPSTDAEYPAN) is disordered. Serine 90 carries the phosphoserine modification. Threonine 92 bears the Phosphothreonine mark. Serine 94 bears the Phosphoserine mark. Tyrosine 110 carries the phosphotyrosine modification. SH3 domains follow at residues 111-170 (DLNI…EEVD) and 195-257 (RVLH…VLSD). Residues 285–380 (WYYGNVTRHQ…EKLYLVRALQ (96 aa)) form the SH2 domain.

In terms of assembly, interacts with DOCK1, LIMS1 and TGFB1I1. Part of a complex containing PPP1R15B, PP1 and NCK2. Interacts with FASLG. Interacts with AXL. Interacts with PAK1, PKN2 and SOS1. Interacts (via SH2 domain) with EGFR. Interacts (via SH2 domain) with DDR1. Interacts with IRS1. In terms of processing, phosphorylated. In terms of tissue distribution, ubiquitous.

Its subcellular location is the cytoplasm. It localises to the endoplasmic reticulum. Adapter protein which associates with tyrosine-phosphorylated growth factor receptors or their cellular substrates. Maintains low levels of EIF2S1 phosphorylation by promoting its dephosphorylation by PP1. Plays a role in ELK1-dependent transcriptional activation in response to activated Ras signaling. This is Cytoplasmic protein NCK2 (NCK2) from Homo sapiens (Human).